A 246-amino-acid polypeptide reads, in one-letter code: Uridylate kinase (246 aa).

Position 20–23 (20–23 (KISG)) interacts with ATP. The tract at residues 28 to 33 (GDQGYG) is involved in allosteric activation by GTP. Glycine 62 serves as a coordination point for UMP. Residues glycine 63 and arginine 67 each coordinate ATP. UMP-binding positions include aspartate 82 and 143–150 (TGNPYFTT). Threonine 170, tyrosine 176, and aspartate 179 together coordinate ATP.

This sequence belongs to the UMP kinase family. Homohexamer.

Its subcellular location is the cytoplasm. The enzyme catalyses UMP + ATP = UDP + ADP. It functions in the pathway pyrimidine metabolism; CTP biosynthesis via de novo pathway; UDP from UMP (UMPK route): step 1/1. Its activity is regulated as follows. Allosterically activated by GTP. Inhibited by UTP. Its function is as follows. Catalyzes the reversible phosphorylation of UMP to UDP. This Cereibacter sphaeroides (strain ATCC 17029 / ATH 2.4.9) (Rhodobacter sphaeroides) protein is Uridylate kinase.